Reading from the N-terminus, the 991-residue chain is Gingipain R1 (991 aa).

The N-terminal stretch at 1–24 (MKNLNKFVSIALCSSLLGGMAFAQ) is a signal peptide. Residues 25-227 (QTELGRNPNV…RMFMNYEPGR (203 aa)) constitute a propeptide that is removed on maturation. Ca(2+)-binding residues include D305, V327, D330, Y332, E334, E388, and H393. Catalysis depends on H438, which acts as the Proton donor. C471 (nucleophile) is an active-site residue. Ca(2+) contacts are provided by F476, E485, D519, E520, E523, and H529.

This sequence belongs to the peptidase C25 family.

The protein resides in the secreted. It carries out the reaction Hydrolysis of proteins and small molecule substrates, with a preference for Arg in P1.. With respect to regulation, requires cysteine for activation and Ca(2+) and/or Mg(2+) for stabilization. It is stimulated by glycine-containing dipeptides. It is resistant to inhibition by proteinase inhibitors in human plasma. Functionally, thiol protease. Acts synergistically with RgpB to catalyze the maturation of fimbrial subunits, such as FimA. Its proteolytic activity is a major factor in both periodontal tissue destruction and in evasion of host defense mechanisms. The protein is Gingipain R1 (rgpA) of Porphyromonas gingivalis (Bacteroides gingivalis).